Consider the following 177-residue polypeptide: Glutathione peroxidase homolog (177 aa).

C35 is an active-site residue.

The protein belongs to the glutathione peroxidase family.

In terms of biological role, important in the cellular metabolism or defense processes particular to this pathogen. In Neisseria meningitidis serogroup A / serotype 4A (strain DSM 15465 / Z2491), this protein is Glutathione peroxidase homolog (gpxA).